Reading from the N-terminus, the 204-residue chain is Casparian strip membrane protein 2 (204 aa).

The Cytoplasmic segment spans residues 1–42 (MKNESTTIDVPAESSSAMKGKAPLIGVARDHTTSGSGGYNRG). Residues 43 to 63 (LSIFDFLLRLAAIVAALAAAA) form a helical membrane-spanning segment. Residues 64-92 (TMGTSDETLPFFTQFLQFEASYDDLPTFQ) lie on the Extracellular side of the membrane. Residues 93 to 113 (FFVIAMALVGGYLVLSLPISV) traverse the membrane as a helical segment. Over 114-125 (VTILRPLATAPR) the chain is Cytoplasmic. Residues 126–146 (LLLLVLDTAVLALNTAAASSA) form a helical membrane-spanning segment. Residues 147–178 (AAISYLAHSGNQNTNWLPICQQFGDFCQKSSG) lie on the Extracellular side of the membrane. A helical membrane pass occupies residues 179–199 (AVVSAFISVVFFTILVVISGV). Residues 200 to 204 (ALKRH) are Cytoplasmic-facing.

Belongs to the Casparian strip membrane proteins (CASP) family. In terms of assembly, homodimer and heterodimers.

It localises to the cell membrane. Its function is as follows. Regulates membrane-cell wall junctions and localized cell wall deposition. Required for establishment of the Casparian strip membrane domain (CSD) and the subsequent formation of Casparian strips, a cell wall modification of the root endodermis that determines an apoplastic barrier between the intraorganismal apoplasm and the extraorganismal apoplasm and prevents lateral diffusion. The sequence is that of Casparian strip membrane protein 2 from Arabidopsis lyrata subsp. lyrata (Lyre-leaved rock-cress).